We begin with the raw amino-acid sequence, 364 residues long: Chorismate synthase (364 aa).

Arg-48 lines the NADP(+) pocket. Residues Arg-126–Ser-128, Gly-288, Lys-303–Ser-307, and Arg-329 contribute to the FMN site.

It belongs to the chorismate synthase family. In terms of assembly, homotetramer. FMNH2 serves as cofactor.

The enzyme catalyses 5-O-(1-carboxyvinyl)-3-phosphoshikimate = chorismate + phosphate. It participates in metabolic intermediate biosynthesis; chorismate biosynthesis; chorismate from D-erythrose 4-phosphate and phosphoenolpyruvate: step 7/7. Catalyzes the anti-1,4-elimination of the C-3 phosphate and the C-6 proR hydrogen from 5-enolpyruvylshikimate-3-phosphate (EPSP) to yield chorismate, which is the branch point compound that serves as the starting substrate for the three terminal pathways of aromatic amino acid biosynthesis. This reaction introduces a second double bond into the aromatic ring system. This chain is Chorismate synthase, found in Desulfovibrio desulfuricans (strain ATCC 27774 / DSM 6949 / MB).